The chain runs to 277 residues: Caspase-3 (277 aa).

Residue methionine 1 is modified to N-acetylmethionine. Propeptides lie at residues 1–9 and 10–28; these read MENNETSVD and AKSIKNLETQTIHGSKSMD. Lysine 11 carries the post-translational modification N6-acetyllysine. Serine 26 is modified (phosphoserine). Active-site residues include histidine 121 and cysteine 163. S-nitrosocysteine; in inhibited form is present on cysteine 163.

Belongs to the peptidase C14A family. As to quaternary structure, heterotetramer that consists of two anti-parallel arranged heterodimers, each one formed by a 17 kDa (p17) and a 12 kDa (p12) subunit. Interacts with BIRC6/bruce. In terms of processing, cleavage by granzyme B, caspase-6, caspase-8 and caspase-10 generates the two active subunits. Additional processing of the propeptides is likely due to the autocatalytic activity of the activated protease. Active heterodimers between the small subunit of caspase-7 protease and the large subunit of caspase-3 also occur and vice versa. Post-translationally, S-nitrosylated on its catalytic site cysteine in unstimulated cell lines and denitrosylated upon activation of the Fas apoptotic pathway, associated with an increase in intracellular caspase activity. Fas therefore activates caspase-3 not only by inducing the cleavage of the caspase zymogen to its active subunits, but also by stimulating the denitrosylation of its active site thiol. Ubiquitinated by BIRC6; this activity is inhibited by DIABLO/SMAC.

It localises to the cytoplasm. It catalyses the reaction Strict requirement for an Asp residue at positions P1 and P4. It has a preferred cleavage sequence of Asp-Xaa-Xaa-Asp-|- with a hydrophobic amino-acid residue at P2 and a hydrophilic amino-acid residue at P3, although Val or Ala are also accepted at this position.. With respect to regulation, inhibited by BIRC6; following inhibition of BIRC6-caspase binding by DIABLO/SMAC, BIRC6 is subjected to caspase cleavage, leading to an increase in active caspases. In terms of biological role, involved in the activation cascade of caspases responsible for apoptosis execution. At the onset of apoptosis, it proteolytically cleaves poly(ADP-ribose) polymerase PARP1 at a '216-Asp-|-Gly-217' bond. Cleaves and activates sterol regulatory element binding proteins (SREBPs) between the basic helix-loop-helix leucine zipper domain and the membrane attachment domain. Cleaves and activates caspase-6, -7 and -9 (CASP6, CASP7 and CASP9, respectively). Cleaves and inactivates interleukin-18 (IL18). Triggers cell adhesion in sympathetic neurons through RET cleavage. Cleaves IL-1 beta between an Asp and an Ala, releasing the mature cytokine which is involved in a variety of inflammatory processes. Cleaves and inhibits serine/threonine-protein kinase AKT1 in response to oxidative stress. Acts as an inhibitor of type I interferon production during virus-induced apoptosis by mediating cleavage of antiviral proteins CGAS, IRF3 and MAVS, thereby preventing cytokine overproduction. Also involved in pyroptosis by mediating cleavage and activation of gasdermin-E (GSDME). Cleaves XRCC4 and phospholipid scramblase proteins XKR4, XKR8 and XKR9, leading to promote phosphatidylserine exposure on apoptotic cell surface. Cleaves BIRC6 following inhibition of BIRC6-caspase binding by DIABLO/SMAC. The chain is Caspase-3 (CASP3) from Oryctolagus cuniculus (Rabbit).